The following is a 369-amino-acid chain: MVNTSFETLPRHMQMEILSRVPLKFLMKFMCVSKKWASIIRGEEFREDYLFQSMKRPRVLFVIDHREYLPIKPEAFFHSVYQEDQPLLLSGKQRMRTFETPLVQVFQPIRGLICQQGYGKIVICNPGLKKFRSLPQIKVHKGAPMRTFFGYDEDKDVFKVLCITWLRNGKRSEVSKEYLVYTMGSDEESSSWRLITCEHDHAPVTEGLFKGGVLYYGAKSNNGKSVVMSFNVNSEDFSVIELEVEISPYWRLVNYKGDIALMNNIEDSLYHSREFEMWVRNEVTGNWDRTSIKISHWNGTVDGKTFYFKGTIGTKELAFAPDYWFGEQHFVSYYDTETKNLRRFDIEGMVDQDDFVRTFFDHVDSTWLI.

The F-box domain occupies 3–54 (NTSFETLPRHMQMEILSRVPLKFLMKFMCVSKKWASIIRGEEFREDYLFQSM).

This chain is Putative F-box protein At1g70960, found in Arabidopsis thaliana (Mouse-ear cress).